The sequence spans 738 residues: NAD(P)H-quinone oxidoreductase subunit 5, chloroplastic (738 aa).

17 helical membrane passes run 9 to 29, 39 to 59, 89 to 109, 125 to 145, 147 to 167, 185 to 205, 219 to 239, 258 to 278, 280 to 300, 327 to 347, 354 to 374, 396 to 416, 425 to 445, 542 to 562, 610 to 630, 691 to 711, and 717 to 737; these read WVIP…LFLI, IWAF…LHLS, VDPL…LVLI, FVYI…SNLI, IYFF…FWFT, GDFG…SLEF, NGIN…GAVA, TPIS…FLLA, LLPL…VGTI, LGYM…FHLI, ALLF…VGYS, TTFL…CFWS, WLYS…TAFY, LFPL…GIPF, SLAI…YSFF, GVID…GEEI, and GRIS…LFFI.

This sequence belongs to the complex I subunit 5 family. As to quaternary structure, NDH is composed of at least 16 different subunits, 5 of which are encoded in the nucleus.

It localises to the plastid. The protein localises to the chloroplast thylakoid membrane. It carries out the reaction a plastoquinone + NADH + (n+1) H(+)(in) = a plastoquinol + NAD(+) + n H(+)(out). The enzyme catalyses a plastoquinone + NADPH + (n+1) H(+)(in) = a plastoquinol + NADP(+) + n H(+)(out). Functionally, NDH shuttles electrons from NAD(P)H:plastoquinone, via FMN and iron-sulfur (Fe-S) centers, to quinones in the photosynthetic chain and possibly in a chloroplast respiratory chain. The immediate electron acceptor for the enzyme in this species is believed to be plastoquinone. Couples the redox reaction to proton translocation, and thus conserves the redox energy in a proton gradient. The chain is NAD(P)H-quinone oxidoreductase subunit 5, chloroplastic (ndhF) from Saccharum officinarum (Sugarcane).